The sequence spans 154 residues: 6,7-dimethyl-8-ribityllumazine synthase (154 aa).

Residues 22 to 23 (FN), 56 to 58 (AFE), and 80 to 82 (TVI) each bind 5-amino-6-(D-ribitylamino)uracil. 85 to 86 (AT) lines the (2S)-2-hydroxy-3-oxobutyl phosphate pocket. The Proton donor role is filled by His88. Phe113 is a 5-amino-6-(D-ribitylamino)uracil binding site. A (2S)-2-hydroxy-3-oxobutyl phosphate-binding site is contributed by Arg127.

The protein belongs to the DMRL synthase family. Forms an icosahedral capsid composed of 60 subunits, arranged as a dodecamer of pentamers. Can interact with riboflavin synthase, forming a lumazine synthase/riboflavin synthase complex, also designated as 'heavy riboflavin synthase complex', which consists of a trimer of riboflavin synthase enclosed within the icosahedral structure composed of 60 subunits of 6,7-dimethyl-8-ribityllumazine synthase.

The enzyme catalyses (2S)-2-hydroxy-3-oxobutyl phosphate + 5-amino-6-(D-ribitylamino)uracil = 6,7-dimethyl-8-(1-D-ribityl)lumazine + phosphate + 2 H2O + H(+). Its pathway is cofactor biosynthesis; riboflavin biosynthesis; riboflavin from 2-hydroxy-3-oxobutyl phosphate and 5-amino-6-(D-ribitylamino)uracil: step 1/2. Functionally, catalyzes the formation of 6,7-dimethyl-8-ribityllumazine by condensation of 5-amino-6-(D-ribitylamino)uracil with 3,4-dihydroxy-2-butanone 4-phosphate. This is the penultimate step in the biosynthesis of riboflavin. Is able to use the non-natural R enantiomer of 3,4-dihydroxy-2-butanone 4-phosphate as a substrate, but with less efficiency than the natural S enantiomer. Cannot use unphosphorylated 3,4-dihydroxy-2-butanone, 3,4-dihydroxy-2-butanone 3-phosphate or diacetyl as substrates. This chain is 6,7-dimethyl-8-ribityllumazine synthase (ribH), found in Bacillus subtilis (strain 168).